Here is a 200-residue protein sequence, read N- to C-terminus: Prolactin-2 (200 aa).

Residues 1–23 (MRQRRISGSNLMMVLCVVAMCRA) form the signal peptide. Disulfide bonds link C64–C173 and C190–C200.

It belongs to the somatotropin/prolactin family.

The protein resides in the secreted. In Oreochromis mossambicus (Mozambique tilapia), this protein is Prolactin-2 (prl2).